The following is a 676-amino-acid chain: MADFETDEASSKSESPEQEGQGSEDKSLLHQRLAIRELIDTEVSYLHTLRLCTSDIRGHLQQLPPGDLDILFSNIDDIIQVSSRFLHGLQETACKEEKQAHLIGNLFLEFQEELEQVYKVYCANYDQALLLVKAYQKEPELQKEIQGIIEAAVPQAGPSGLSFLLVIPLQRITKYPLLLQKILENTPADASAHPVLQRATSALQDVNSNINEYKMRKEVALKYTKVEQLSLRERLARINTHTLSKKTTRLSQLLKQEAGLVPRTEDKEFDDLEERFQWVSLCVTELKSNVAAYMDNLEAFLCFRPHERNLDIPGGAAEQYCSLARDLQLQAFLQFKQRLTGLVWQPLCSLARALVGPQNLIKKRLDKLLDFERVEEKLLDVGSVTYEEEAARHTYQALNSLIVAELPQFNHLVMQWLGQILRTFVVLQRDLADQVLRRAESSMALLPHRHVSEPDFQKLLEDTLGQSSSQLRHFRESFEKVLPPSTSQPLLPGSEHQMQSLLTRYGPGKIYQVTSNINGTGTLDLTLPRGQIVALLQNKDTKGNNSRWLVDTGGHRGYVPAGKLQLYHPINPSEKEPRRQTGMPEDYWLPTPEPTQPSVPTVPTMSQVVAVYPFVARSTHELSLQAGQPVTILEAQDKKGNPEWSLVEANGQRGYVPSNFLARTPSPTPRGWNLPS.

Residues Met-1–Lys-26 form a disordered region. One can recognise a DH domain in the interval His-30–Tyr-213. Positions Leu-254–Asp-455 constitute a BAR domain. SH3 domains follow at residues Gly-506 to Pro-569 and Pro-603 to Ser-666. Disordered regions lie at residues His-568 to Thr-601 and Pro-657 to Ser-676.

Functionally, may act as a guanine nucleotide exchange factor (GEF). In Rattus norvegicus (Rat), this protein is Rho guanine nucleotide exchange factor 37 (Arhgef37).